A 127-amino-acid chain; its full sequence is Ribosome-binding factor A (127 aa).

It belongs to the RbfA family. Monomer. Binds 30S ribosomal subunits, but not 50S ribosomal subunits or 70S ribosomes.

It localises to the cytoplasm. One of several proteins that assist in the late maturation steps of the functional core of the 30S ribosomal subunit. Associates with free 30S ribosomal subunits (but not with 30S subunits that are part of 70S ribosomes or polysomes). Required for efficient processing of 16S rRNA. May interact with the 5'-terminal helix region of 16S rRNA. This chain is Ribosome-binding factor A, found in Rickettsia typhi (strain ATCC VR-144 / Wilmington).